The primary structure comprises 278 residues: Small ribosomal subunit protein uS3 (278 aa).

Residues leucine 39 to serine 107 enclose the KH type-2 domain. Positions alanine 244–glutamate 278 are disordered. Residues lysine 251–glutamate 278 show a composition bias toward basic and acidic residues.

It belongs to the universal ribosomal protein uS3 family. In terms of assembly, part of the 30S ribosomal subunit. Forms a tight complex with proteins S10 and S14.

Binds the lower part of the 30S subunit head. Binds mRNA in the 70S ribosome, positioning it for translation. The sequence is that of Small ribosomal subunit protein uS3 from Dehalococcoides mccartyi (strain ATCC BAA-2266 / KCTC 15142 / 195) (Dehalococcoides ethenogenes (strain 195)).